The primary structure comprises 1536 residues: MAPLLGRKPYPLVKPLSEPPGPGEEVYTIEHTKEAFRNKEEYEARLRRYGERIWTCKSTGSSQLTHKEAWEEEQEVTELLQEEYPVWFEKPVLEIVHHNTVPLDKLVDQVWVEILTKYAVGEKCDLMVGNDKTLSVEVVKIHPLENPPEENAEKKMEGACDSPSSDKENASQENLKKEPQSKEEESRRESLSDRARRSPRKLPTTMKEEKKKWVMPKFLPHKYDVKLVNEDKVISDVPADNLFRTERPPNKEIMRYFIRHYALRLGSGESAPWVVEDELVKKFSLPSKFSDFLLDPHKFLAENPSTKRKSLSSPEGKPRKRLKNVETGTGGEGAKGDKKKNKDSQNIPLSPTIWSHMQVKKVNGSPLKMKNSGTSKKSDEENVLGTPKSSKKQGDKKSSDPKRRRKSGLNKTPNSQRLSKKEDKSLGGAKKPRMKQMTLLDLAKSPAAAGSPKKQRRSSTTGSAKLGKPFPPMALHLLRFYKENKGKEDKKTTLSSLLSKAAKALSPEDRSRLPEELKELVQKRWELLEQKRRWALMSEEEKQSVLKQKRQEVKQKLREKAKERREKEMQVRREMSRRYEDQELEGKNLPAFRLFDMPEGLPNTIFGDVAMVVEFLHCYSGLLMPDDQYPITSIALLEALAGEKAGFLYLNRVLVVLLQTLLQDELAEGYSELDMPLSEIPLTMHSVSELVRLCLRPSDAHEEESARGSDDWQSGADFDDMVSSEFLEKLETAEVFELDPQEKVSLLLALCHRILMTYSVEDHVEAVHQKSAEMWKERVATLKEANDRKRAEKQKRKEQMETKTDGDVLIKAEKKKESTVKKETPKVLPKEEPEPEDMISTVKSRRLMSIQAKKEKEEQERLNKVRMEKEAEEERIRRQKAATEKAFQDAVTKAKLVLRRTPLGTDRNHNRYWLFSDVVPGLYIEKGWVHESIDYSFTLPPEEEPVLTEEEEEEEEVKKEEETEDGEKEDEGSIISASNDISQQGAPSHESSIETTVPKQGQNLWFVCDTPKDFDELLESLHPQGVRESELKIRLQINYQEILHSIHLTKKGNPGLKTCDGHQELLKFLRSDIIEVASRLQKGGLGYLEDTSEFEEFEERVKTLEKLPEFGECVIALQESVIKKFLQGFMAPKQKKKKKTGGEESTTAEEVDDQKKLAEEARVATAVEKWKTAVREAQTFSRMHVLLGMLDACIKWDMSAENARCKVCRRKGEDDKLILCDECNKAFHLFCLRPALYRIPAGEWLCPACQPTIARRSSRGRNYKEDSEEEEDSEEEDEEESEEEDSEEEHRNTGHSLRSRKKVKTSSKSKMQKKPAKPASRSASKTDTNPSKTSPKSSAKPKSRAAPSSPVDIDELVRQSSKPPSRKKDVELQKCEEILQKIMKFRHSWPFREPVSAEEAEDYQDVITSPMDLTTMQGKFKSSEYHSASDFIEDMKLIFSNAEEYNQPSSNVLTCMSRTEEAFVELLQKSLPGVSYLRRRTRKRAATPSDNSDDDDDDEEEDERSKKQKNGKQGKKASSKRKVEHSRTEKYQTKQK.

Residues 25–130 (EVYTIEHTKE…GEKCDLMVGN (106 aa)) form the WAC domain. 3 disordered regions span residues 144–207 (LENP…TTMK), 304–470 (PSTK…GKPF), and 557–579 (LREKAKERREKEMQVRREMSRRY). Composition is skewed to basic and acidic residues over residues 151-196 (NAEK…DRAR) and 334-343 (AKGDKKKNKD). The segment covering 344–355 (SQNIPLSPTIWS) has biased composition (polar residues). Residues 392 to 401 (KQGDKKSSDP) are compositionally biased toward basic and acidic residues. Low complexity predominate over residues 443 to 452 (AKSPAAAGSP). A coiled-coil region spans residues 515–583 (EELKELVQKR…EMSRRYEDQE (69 aa)). The 65-residue stretch at 603–667 (NTIFGDVAMV…LQTLLQDELA (65 aa)) folds into the DDT domain. 2 coiled-coil regions span residues 768–803 (HQKSAEMWKERVATLKEANDRKRAEKQKRKEQMETK) and 850–890 (IQAK…FQDA). Basic and acidic residues predominate over residues 785 to 832 (ANDRKRAEKQKRKEQMETKTDGDVLIKAEKKKESTVKKETPKVLPKEE). The disordered stretch occupies residues 785-839 (ANDRKRAEKQKRKEQMETKTDGDVLIKAEKKKESTVKKETPKVLPKEEPEPEDMI). The interval 940 to 973 (PPEEEPVLTEEEEEEEEVKKEEETEDGEKEDEGS) is disordered. Composition is skewed to acidic residues over residues 941-955 (PEEEPVLTEEEEEEE) and 962-972 (ETEDGEKEDEG). The segment at 1202–1252 (NARCKVCRRKGEDDKLILCDECNKAFHLFCLRPALYRIPAGEWLCPACQPT) adopts a PHD-type zinc-finger fold. Disordered regions lie at residues 1256–1371 (RSSR…KDVE) and 1477–1536 (LRRR…TKQK). The stretch at 1261–1293 (RNYKEDSEEEEDSEEEDEEESEEEDSEEEHRNT) forms a coiled coil. Acidic residues predominate over residues 1266–1287 (DSEEEEDSEEEDEEESEEEDSE). Residues 1297–1316 (LRSRKKVKTSSKSKMQKKPA) show a composition bias toward basic residues. Residues 1325–1350 (KTDTNPSKTSPKSSAKPKSRAAPSSP) are compositionally biased toward low complexity. Phosphoserine is present on S1349. The Bromo domain occupies 1366–1470 (RKKDVELQKC…EAFVELLQKS (105 aa)). Residues 1491 to 1502 (NSDDDDDDEEED) are compositionally biased toward acidic residues. Over residues 1506–1524 (KKQKNGKQGKKASSKRKVE) the composition is skewed to basic residues. Residues 1525-1536 (HSRTEKYQTKQK) show a composition bias toward basic and acidic residues.

Belongs to the WAL family. BAZ1B subfamily. As to quaternary structure, interacts with smarca5/snf2h; the interaction is direct and forms the WICH complex. Component of the B-WICH complex. Mn(2+) serves as cofactor.

Its subcellular location is the nucleus. The enzyme catalyses L-tyrosyl-[protein] + ATP = O-phospho-L-tyrosyl-[protein] + ADP + H(+). In terms of biological role, atypical tyrosine-protein kinase that plays a central role in chromatin remodeling and acts as a transcription regulator. Involved in DNA damage response by phosphorylating 'Tyr-142' of histone H2AX (H2AXY142ph). H2AXY142ph plays a central role in DNA repair and acts as a mark that distinguishes between apoptotic and repair responses to genotoxic stress. Essential component of the WICH complex, a chromatin remodeling complex that mobilizes nucleosomes and reconfigures irregular chromatin to a regular nucleosomal array structure. The WICH complex regulates the transcription of various genes, has a role in RNA polymerase I and RNA polymerase III transcription, mediates the histone H2AX phosphorylation at 'Tyr-142', and is involved in the maintenance of chromatin structures during DNA replication processes. The sequence is that of Tyrosine-protein kinase BAZ1B (baz1b) from Danio rerio (Zebrafish).